Consider the following 99-residue polypeptide: Ferredoxin-2 (99 aa).

Residues 4–96 (YQVRLINKKR…DCTIRTHQEA (93 aa)) form the 2Fe-2S ferredoxin-type domain. Positions 42, 47, 50, and 80 each coordinate [2Fe-2S] cluster.

Belongs to the 2Fe2S plant-type ferredoxin family. [2Fe-2S] cluster serves as cofactor.

Functionally, ferredoxins are iron-sulfur proteins that transfer electrons in a wide variety of metabolic reactions. Donates electrons to the nitrogenase. The chain is Ferredoxin-2 (fdxH) from Leptolyngbya boryana (Plectonema boryanum).